Here is a 186-residue protein sequence, read N- to C-terminus: Ribosome-recycling factor (186 aa).

The disordered stretch occupies residues 144–163 (EKDGVIGQDESRAQSERVQK).

The protein belongs to the RRF family.

It is found in the cytoplasm. In terms of biological role, responsible for the release of ribosomes from messenger RNA at the termination of protein biosynthesis. May increase the efficiency of translation by recycling ribosomes from one round of translation to another. The protein is Ribosome-recycling factor of Rhizobium johnstonii (strain DSM 114642 / LMG 32736 / 3841) (Rhizobium leguminosarum bv. viciae).